Reading from the N-terminus, the 572-residue chain is Thiamine biosynthesis protein THI22 (572 aa).

The first 19 residues, 1 to 19 (MVIILLGLCTLGFPRTAFC), serve as a signal peptide directing secretion.

This sequence belongs to the thiaminase-2 family.

It is found in the secreted. Is not required for thiamine biosynthesis. The chain is Thiamine biosynthesis protein THI22 (THI22) from Saccharomyces cerevisiae (strain ATCC 204508 / S288c) (Baker's yeast).